The following is a 293-amino-acid chain: Cell adhesion molecule CEACAM21 (293 aa).

Residues 1–34 (MGPPSACPHRECIPWQGLLLTASLLTFWNAPTTA) form the signal peptide. Residues 35–240 (WLFIASAPFE…TVKSDDNTLG (206 aa)) are Extracellular-facing. Residue Asn-111 is glycosylated (N-linked (GlcNAc...) asparagine). Residues 147–231 (PSIQASSTTV…SNRSDPLKLT (85 aa)) form the Ig-like C2-type domain. Cys-166 and Cys-214 form a disulfide bridge. The helical transmembrane segment at 241-261 (ILIGVLVGSLLVAALVCFLLL) threads the bilayer. Residues 262-293 (RKTGRASDQSDFREQQPPASTPGHGPSDSSIS) are Cytoplasmic-facing. The tract at residues 267-293 (ASDQSDFREQQPPASTPGHGPSDSSIS) is disordered.

Belongs to the immunoglobulin superfamily. CEA family.

The protein resides in the membrane. In Homo sapiens (Human), this protein is Cell adhesion molecule CEACAM21.